The chain runs to 208 residues: ATP-dependent Clp protease proteolytic subunit (208 aa).

The active-site Nucleophile is serine 98. Residue histidine 123 is part of the active site.

This sequence belongs to the peptidase S14 family. Fourteen ClpP subunits assemble into 2 heptameric rings which stack back to back to give a disk-like structure with a central cavity, resembling the structure of eukaryotic proteasomes.

The protein localises to the cytoplasm. The catalysed reaction is Hydrolysis of proteins to small peptides in the presence of ATP and magnesium. alpha-casein is the usual test substrate. In the absence of ATP, only oligopeptides shorter than five residues are hydrolyzed (such as succinyl-Leu-Tyr-|-NHMec, and Leu-Tyr-Leu-|-Tyr-Trp, in which cleavage of the -Tyr-|-Leu- and -Tyr-|-Trp bonds also occurs).. Functionally, cleaves peptides in various proteins in a process that requires ATP hydrolysis. Has a chymotrypsin-like activity. Plays a major role in the degradation of misfolded proteins. In Wolbachia sp. subsp. Drosophila simulans (strain wRi), this protein is ATP-dependent Clp protease proteolytic subunit.